Here is an 87-residue protein sequence, read N- to C-terminus: Translation initiation factor IF-1 (87 aa).

Residues 16-87 form the S1-like domain; sequence LSKEDVIEME…TKGRISYRHK (72 aa).

This sequence belongs to the IF-1 family. As to quaternary structure, component of the 30S ribosomal translation pre-initiation complex which assembles on the 30S ribosome in the order IF-2 and IF-3, IF-1 and N-formylmethionyl-tRNA(fMet); mRNA recruitment can occur at any time during PIC assembly.

It localises to the cytoplasm. One of the essential components for the initiation of protein synthesis. Stabilizes the binding of IF-2 and IF-3 on the 30S subunit to which N-formylmethionyl-tRNA(fMet) subsequently binds. Helps modulate mRNA selection, yielding the 30S pre-initiation complex (PIC). Upon addition of the 50S ribosomal subunit IF-1, IF-2 and IF-3 are released leaving the mature 70S translation initiation complex. In Magnetococcus marinus (strain ATCC BAA-1437 / JCM 17883 / MC-1), this protein is Translation initiation factor IF-1.